A 2077-amino-acid polypeptide reads, in one-letter code: Large tegument protein deneddylase (2077 aa).

Residues 1-231 are deubiquitination activity; it reads MKIITSSTNQ…PDIAITLDKF (231 aa). In terms of domain architecture, Peptidase C76 spans 3–221; sequence IITSSTNQND…ELLILKTYKD (219 aa). Catalysis depends on residues Cys23, Asp156, and His158. A region of interest (interaction with inner tegument protein) is located at residue Ser287.

It belongs to the herpesviridae large tegument protein family. As to quaternary structure, interacts with host CUL1 and CUL4A; these interactions inhibit the E3 ligase activity of cullins. Interacts with inner tegument protein. Interacts with capsid vertex specific component CVC2. Interacts with the major capsid protein/MCP.

Its subcellular location is the virion tegument. It localises to the host cytoplasm. The protein resides in the host nucleus. The enzyme catalyses Thiol-dependent hydrolysis of ester, thioester, amide, peptide and isopeptide bonds formed by the C-terminal Gly of ubiquitin (a 76-residue protein attached to proteins as an intracellular targeting signal).. In terms of biological role, large tegument protein that plays multiple roles in the viral cycle. During viral entry, remains associated with the capsid while most of the tegument is detached and participates in the capsid transport toward the host nucleus. Plays a role in the routing of the capsid at the nuclear pore complex and subsequent uncoating. Within the host nucleus, acts as a deneddylase and promotes the degradation of nuclear CRLs (cullin-RING ubiquitin ligases) and thereby stabilizes nuclear CRL substrates, while cytoplasmic CRLs remain unaffected. These modifications prevent host cell cycle S-phase progression and create a favorable environment allowing efficient viral genome replication. Participates later in the secondary envelopment of capsids. Indeed, plays a linker role for the association of the outer viral tegument to the capsids together with the inner tegument protein. In Homo sapiens (Human), this protein is Large tegument protein deneddylase (U31).